The sequence spans 83 residues: Small ribosomal subunit protein uS17 (83 aa).

It belongs to the universal ribosomal protein uS17 family. In terms of assembly, part of the 30S ribosomal subunit.

Functionally, one of the primary rRNA binding proteins, it binds specifically to the 5'-end of 16S ribosomal RNA. This is Small ribosomal subunit protein uS17 from Aliarcobacter butzleri (strain RM4018) (Arcobacter butzleri).